Consider the following 364-residue polypeptide: Aminomethyltransferase (364 aa).

It belongs to the GcvT family. The glycine cleavage system is composed of four proteins: P, T, L and H.

The enzyme catalyses N(6)-[(R)-S(8)-aminomethyldihydrolipoyl]-L-lysyl-[protein] + (6S)-5,6,7,8-tetrahydrofolate = N(6)-[(R)-dihydrolipoyl]-L-lysyl-[protein] + (6R)-5,10-methylene-5,6,7,8-tetrahydrofolate + NH4(+). Its function is as follows. The glycine cleavage system catalyzes the degradation of glycine. This is Aminomethyltransferase from Shewanella sp. (strain MR-4).